Reading from the N-terminus, the 398-residue chain is Calcium-binding and coiled-coil domain-containing protein 2 (398 aa).

Positions 133–136 match the CLIR motif; that stretch reads ILVV. Residues 137–301 are a coiled coil; it reads TTQGEVEEIE…RENSRLLSYM (165 aa). The LIR-like signature appears at 203–206; the sequence is DYWE. A disordered region spans residues 314–341; that stretch reads TSDEGGAGQNPGLVYGNPYSGIQESSSP. The interval 323 to 333 is interaction with LGALS8; that stretch reads NPGLVYGNPYS. Residues 347–398 are interaction with MYO6; it reads KKCPICKADDICDHTLEQQQMQALCLNCPICDKIFPATEKQIFEDHVFCHSL. The segment at 371–396 adopts a UBZ1-type zinc-finger fold; sequence CLNCPICDKIFPATEKQIFEDHVFCH. Zn(2+) contacts are provided by C374, C377, H392, and H396. S397 is subject to Phosphoserine.

This sequence belongs to the CALCOCO family. Dimer. Part of a complex consisting of CALCOCO2, TAX1BP1 and MYO6. Interacts with MYO6. Interacts with GEMIN4. Interacts with ATG8 family members MAP1LC3A, MAP1LC3B, GABARAP, GABARAPL1 and GABARAPL2. Interacts with ATG8 family member MAP1LC3C. Interacts with LGALS8. Interacts with TOM1; the interaction is indirect and is mediated by MYO6, which acts as a bridge between TOM1 and CALCOCO2. Interacts with AZI2.

The protein resides in the cytoplasm. It localises to the perinuclear region. Its subcellular location is the cytoskeleton. The protein localises to the cytoplasmic vesicle. It is found in the autophagosome membrane. Xenophagy-specific receptor required for autophagy-mediated intracellular bacteria degradation. Acts as an effector protein of galectin-sensed membrane damage that restricts the proliferation of infecting pathogens upon entry into the cytosol by targeting LGALS8-associated bacteria for autophagy. Initially orchestrates bacteria targeting to autophagosomes and subsequently ensures pathogen degradation by regulating pathogen-containing autophagosome maturation. Bacteria targeting to autophagosomes relies on its interaction with MAP1LC3A, MAP1LC3B and/or GABARAPL2, whereas regulation of pathogen-containing autophagosome maturation requires the interaction with MAP3LC3C. May play a role in ruffle formation and actin cytoskeleton organization and seems to negatively regulate constitutive secretion. This is Calcium-binding and coiled-coil domain-containing protein 2 from Macaca fascicularis (Crab-eating macaque).